We begin with the raw amino-acid sequence, 446 residues long: Tol-Pal system protein TolB (446 aa).

A signal peptide spans 1-24 (MKRAFLSALSVGLAALFLTGPAQA).

Belongs to the TolB family. As to quaternary structure, the Tol-Pal system is composed of five core proteins: the inner membrane proteins TolA, TolQ and TolR, the periplasmic protein TolB and the outer membrane protein Pal. They form a network linking the inner and outer membranes and the peptidoglycan layer.

Its subcellular location is the periplasm. Its function is as follows. Part of the Tol-Pal system, which plays a role in outer membrane invagination during cell division and is important for maintaining outer membrane integrity. This Dinoroseobacter shibae (strain DSM 16493 / NCIMB 14021 / DFL 12) protein is Tol-Pal system protein TolB.